Here is a 586-residue protein sequence, read N- to C-terminus: A-type ATP synthase subunit A (586 aa).

232–239 contributes to the ATP binding site; sequence GPFGSGKT.

This sequence belongs to the ATPase alpha/beta chains family. As to quaternary structure, has multiple subunits with at least A(3), B(3), C, D, E, F, H, I and proteolipid K(x).

Its subcellular location is the cell membrane. The enzyme catalyses ATP + H2O + 4 H(+)(in) = ADP + phosphate + 5 H(+)(out). Component of the A-type ATP synthase that produces ATP from ADP in the presence of a proton gradient across the membrane. The A chain is the catalytic subunit. The chain is A-type ATP synthase subunit A from Methanococcus maripaludis (strain C7 / ATCC BAA-1331).